The following is a 345-amino-acid chain: Ribonucleoside-diphosphate reductase subunit beta (345 aa).

Fe cation-binding residues include Asp-88, Glu-118, and His-121. Tyr-125 is an active-site residue. Residues Glu-185, Glu-219, and His-222 each contribute to the Fe cation site.

The protein belongs to the ribonucleoside diphosphate reductase small chain family. As to quaternary structure, tetramer of two alpha and two beta subunits. Fe cation serves as cofactor.

The catalysed reaction is a 2'-deoxyribonucleoside 5'-diphosphate + [thioredoxin]-disulfide + H2O = a ribonucleoside 5'-diphosphate + [thioredoxin]-dithiol. Functionally, provides the precursors necessary for DNA synthesis. Catalyzes the biosynthesis of deoxyribonucleotides from the corresponding ribonucleotides. The protein is Ribonucleoside-diphosphate reductase subunit beta (nrdB) of Halalkalibacterium halodurans (strain ATCC BAA-125 / DSM 18197 / FERM 7344 / JCM 9153 / C-125) (Bacillus halodurans).